Here is a 325-residue protein sequence, read N- to C-terminus: Eukaryotic translation initiation factor 3 subunit I (325 aa).

WD repeat units lie at residues 1-39, 43-81, 87-127, 135-175, and 180-217; these read MKPI…VWYS, ERLG…LWDC, LALL…FFDL, NNEP…QYSA, and VLVN…LFDS. Residue T219 is modified to Phosphothreonine. WD repeat units lie at residues 221–267 and 275–316; these read EHQK…KFEA and EEEF…YFDP. K264 is modified (N6-acetyllysine). Residue K282 forms a Glycyl lysine isopeptide (Lys-Gly) (interchain with G-Cter in ubiquitin) linkage. Y308 carries the post-translational modification Phosphotyrosine.

In terms of assembly, component of the eukaryotic translation initiation factor 3 (eIF-3) complex, which is composed of 13 subunits: EIF3A, EIF3B, EIF3C, EIF3D, EIF3E, EIF3F, EIF3G, EIF3H, EIF3I, EIF3J, EIF3K, EIF3L and EIF3M. The eIF-3 complex appears to include 3 stable modules: module A is composed of EIF3A, EIF3B, EIF3G and EIF3I; module B is composed of EIF3F, EIF3H, and EIF3M; and module C is composed of EIF3C, EIF3D, EIF3E, EIF3K and EIF3L. EIF3C of module C binds EIF3B of module A and EIF3H of module B, thereby linking the three modules. EIF3J is a labile subunit that binds to the eIF-3 complex via EIF3B. The eIF-3 complex interacts with RPS6KB1 under conditions of nutrient depletion. Mitogenic stimulation leads to binding and activation of a complex composed of MTOR and RPTOR, leading to phosphorylation and release of RPS6KB1 and binding of EIF4B to eIF-3. In terms of processing, phosphorylated by TGF-beta type II receptor.

It is found in the cytoplasm. Component of the eukaryotic translation initiation factor 3 (eIF-3) complex, which is required for several steps in the initiation of protein synthesis. The eIF-3 complex associates with the 40S ribosome and facilitates the recruitment of eIF-1, eIF-1A, eIF-2:GTP:methionyl-tRNAi and eIF-5 to form the 43S pre-initiation complex (43S PIC). The eIF-3 complex stimulates mRNA recruitment to the 43S PIC and scanning of the mRNA for AUG recognition. The eIF-3 complex is also required for disassembly and recycling of post-termination ribosomal complexes and subsequently prevents premature joining of the 40S and 60S ribosomal subunits prior to initiation. The eIF-3 complex specifically targets and initiates translation of a subset of mRNAs involved in cell proliferation, including cell cycling, differentiation and apoptosis, and uses different modes of RNA stem-loop binding to exert either translational activation or repression. The polypeptide is Eukaryotic translation initiation factor 3 subunit I (Homo sapiens (Human)).